Here is a 148-residue protein sequence, read N- to C-terminus: 18 kDa antigen (148 aa).

The 111-residue stretch at 21 to 131 folds into the sHSP domain; it reads TSARPAVMPM…KPRKISVDRG (111 aa).

Belongs to the small heat shock protein (HSP20) family.

Functionally, not known. This protein is one of the major immune reactive proteins in mycobacteria. The chain is 18 kDa antigen (hsp18) from Mycobacterium leprae (strain TN).